A 784-amino-acid chain; its full sequence is Cadherin-5 (784 aa).

An N-terminal signal peptide occupies residues 1-24; the sequence is MQRLTELATALGAFLGLLAVAAMA. A propeptide spanning residues 25–45 is cleaved from the precursor; sequence GPNFPQIDTPNMLPAHHRQKR. Cadherin domains lie at 46–149, 150–256, 257–371, 372–476, and 477–593; these read DWIW…WPVF, SHQV…FPVF, TQST…PPVF, QRHF…DNPP, and EFAQ…MAAQ. Topologically, residues 46-599 are extracellular; it reads DWIWNQMHID…MAAQAGVSIQ (554 aa). The Ca(2+) site is built by glutamate 56 and glutamate 57. N-linked (GlcNAc...) asparagine glycosylation is present at asparagine 59. Ca(2+) contacts are provided by aspartate 107, glutamate 109, aspartate 141, isoleucine 142, asparagine 143, aspartate 144, and asparagine 145. A glycan (N-linked (GlcNAc...) asparagine) is linked at asparagine 155. Ca(2+)-binding residues include aspartate 175, aspartate 177, histidine 184, and aspartate 229. N-linked (GlcNAc...) asparagine glycosylation is found at asparagine 441, asparagine 523, and asparagine 535. The chain crosses the membrane as a helical span at residues 600 to 620; sequence ALVAIFLCILTITVITLLIIL. Residues 621–660 are required for interaction with PALS1; the sequence is RRRIRKQAHAHSKSALEIHEQLVTYDEEGGGEMDTTSYDV. Residues 621–784 lie on the Cytoplasmic side of the membrane; it reads RRRIRKQAHA…GSDPQEELII (164 aa).

Part of a complex composed of AMOTL2, MAGI1 and CDH5, within the complex AMOTL2 acts as a scaffold protein for the interaction of MAGI1 with CDH5. The complex is required for coupling actin fibers to cell junctions in endothelial cells. Within the complex AMOTL2 (via its N-terminus) interacts with CDH5. Interacts (via cadherin 5 domain) with PTPRB. Interacts with TRPC4. Interacts with KRIT1. Interacts with PARD3. Interacts with RTN4 (isoform B). Interacts with PALS1; the interaction promotes PALS1 localization to cell junctions and is required for CDH5-mediated vascular lumen formation and endothelial cell polarity. Interacts with CTNND1/p120-catenin; the interaction controls CADH5 endocytosis. Post-translationally, phosphorylated on tyrosine residues by KDR/VEGFR-2. Dephosphorylated by PTPRB. O-glycosylated. As to expression, expressed in postnatal endothelial cells of the retinal vascular plexus (at protein level).

Its subcellular location is the cell junction. The protein resides in the adherens junction. It is found in the cell membrane. The protein localises to the cytoplasm. In terms of biological role, cadherins are calcium-dependent cell adhesion proteins. They preferentially interact with themselves in a homophilic manner in connecting cells; cadherins may thus contribute to the sorting of heterogeneous cell types. This cadherin may play an important role in endothelial cell biology through control of the cohesion and organization of the intercellular junctions. It associates with alpha-catenin forming a link to the cytoskeleton. Plays a role in coupling actin fibers to cell junctions in endothelial cells, via acting as a cell junctional complex anchor for AMOTL2 and MAGI1. Acts in concert with KRIT1 and PALS1 to establish and maintain correct endothelial cell polarity and vascular lumen. These effects are mediated by recruitment and activation of the Par polarity complex and RAP1B. Required for activation of PRKCZ and for localization of phosphorylated PRKCZ, PARD3, TIAM1 and RAP1B to the cell junction. Associates with CTNND1/p120-catenin to control CADH5 endocytosis. This Mus musculus (Mouse) protein is Cadherin-5.